The chain runs to 118 residues: UPF0134 protein MPN_287 (118 aa).

This sequence belongs to the UPF0134 family.

The chain is UPF0134 protein MPN_287 from Mycoplasma pneumoniae (strain ATCC 29342 / M129 / Subtype 1) (Mycoplasmoides pneumoniae).